The primary structure comprises 53 residues: Metallothionein (53 aa).

The propeptide occupies 1–6 (MRVIRM). 9 residues coordinate Cu(+): Cys17, His19, Cys22, Cys24, Cys32, His33, Cys34, Cys43, and Cys45.

This sequence belongs to the metallothionein superfamily.

Functionally, metallothioneins are small proteins that have a high content of cysteine residues which allow them to bind heavy metal ions through clusters of thiolate bonds. MymT binds up to seven ions of Cu(+), with a preference for four to six Cu(+) ions, in a solvent-shielded core. MymT protects M.tuberculosis from copper toxicity. The polypeptide is Metallothionein (mymT) (Mycobacterium tuberculosis (strain CDC 1551 / Oshkosh)).